Consider the following 284-residue polypeptide: Pantothenate synthetase (284 aa).

Met-30–His-37 is an ATP binding site. His-37 acts as the Proton donor in catalysis. Gln-61 is a (R)-pantoate binding site. Residue Gln-61 participates in beta-alanine binding. Position 147–150 (Gly-147–Asp-150) interacts with ATP. Gln-153 lines the (R)-pantoate pocket. ATP contacts are provided by residues Val-176 and Met-184–Arg-187.

It belongs to the pantothenate synthetase family. As to quaternary structure, homodimer.

It is found in the cytoplasm. It catalyses the reaction (R)-pantoate + beta-alanine + ATP = (R)-pantothenate + AMP + diphosphate + H(+). The protein operates within cofactor biosynthesis; (R)-pantothenate biosynthesis; (R)-pantothenate from (R)-pantoate and beta-alanine: step 1/1. In terms of biological role, catalyzes the condensation of pantoate with beta-alanine in an ATP-dependent reaction via a pantoyl-adenylate intermediate. The chain is Pantothenate synthetase from Pelobacter propionicus (strain DSM 2379 / NBRC 103807 / OttBd1).